We begin with the raw amino-acid sequence, 207 residues long: Glycerol-3-phosphate acyltransferase (207 aa).

5 helical membrane passes run Val4–Val24, Ile58–Leu78, Glu86–His106, Ile120–Ala140, and Val162–Ile182.

This sequence belongs to the PlsY family. As to quaternary structure, probably interacts with PlsX.

The protein localises to the cell inner membrane. It catalyses the reaction an acyl phosphate + sn-glycerol 3-phosphate = a 1-acyl-sn-glycero-3-phosphate + phosphate. The protein operates within lipid metabolism; phospholipid metabolism. Functionally, catalyzes the transfer of an acyl group from acyl-phosphate (acyl-PO(4)) to glycerol-3-phosphate (G3P) to form lysophosphatidic acid (LPA). This enzyme utilizes acyl-phosphate as fatty acyl donor, but not acyl-CoA or acyl-ACP. This Ralstonia pickettii (strain 12J) protein is Glycerol-3-phosphate acyltransferase.